A 433-amino-acid chain; its full sequence is MTDFSPREIVSELDRFIVGQADAKRAVAIALRNRWRRLQLEGSLREEVLPKNILMIGPTGVGKTEIARRLAKLAGAPFLKVEATKFTEVGYVGRDVEQIIRDLVEVAIAQVREKKRKDVQARAQVAAEERVLDALVGPGSGPATRDSFRKKLRAGELNDKEIEIETQAGSGSPMFEIPGMPGAQIGAVSLGDIFGKMGGRTKKRRLTVADSHEILVNEEADKLLDTDQLVQEAIAAVENNGIVFLDEIDKICVRDGRSGGEVSREGVQRDLLPLIEGTTVSTKHGAVKTEHILFIASGAFHIAKPSDLLPELQGRLPIRVELNALSRDDMRRILTEPEASLIKQYVALMKTEGVTLDFSDDAIDALADVAVAVNSTVENIGARRLQTVMERVLDEISFVAPDRHGETFQVDADYVKTNVGDLAKNTDLSRFIL.

ATP-binding positions include valine 18, glycine 60–glutamate 65, aspartate 246, glutamate 311, and arginine 383.

Belongs to the ClpX chaperone family. HslU subfamily. In terms of assembly, a double ring-shaped homohexamer of HslV is capped on each side by a ring-shaped HslU homohexamer. The assembly of the HslU/HslV complex is dependent on binding of ATP.

The protein resides in the cytoplasm. In terms of biological role, ATPase subunit of a proteasome-like degradation complex; this subunit has chaperone activity. The binding of ATP and its subsequent hydrolysis by HslU are essential for unfolding of protein substrates subsequently hydrolyzed by HslV. HslU recognizes the N-terminal part of its protein substrates and unfolds these before they are guided to HslV for hydrolysis. The sequence is that of ATP-dependent protease ATPase subunit HslU from Rhodopseudomonas palustris (strain TIE-1).